Consider the following 213-residue polypeptide: MDSAQIQKAVKEARTLAKPRNFTQSVDLIVNLKELDLTRPENRLKEQIVLPSGKGKDTKIAVIAKGDLAAQAAEMGLTVIRQEELEELGKNKKAAKRIANEHGFFIAQADMMPLVGKSLGPVLGPRGKMPQPVPGNANLAPLVARFKKTVAINTRDKSLFQVYIGTEAMSDEEIAANAEAILNVVAKKYEKGLYHVKSAFTKLTMGAAAPISK.

The protein belongs to the universal ribosomal protein uL1 family. As to quaternary structure, part of the 50S ribosomal subunit.

Probably involved in E site tRNA release. Binds directly to 23S rRNA. Functionally, protein L1 is also a translational repressor protein, it controls the translation of the L1 operon by binding to its mRNA. Thus it also controls transcription of L10 and L12 by translational coupling. Unlike the case in E.coli, where the site is in the untranslated mRNA leader, this site is within the L1 protein's structural gene. The protein is Large ribosomal subunit protein uL1 of Methanococcus vannielii (strain ATCC 35089 / DSM 1224 / JCM 13029 / OCM 148 / SB).